Here is a 361-residue protein sequence, read N- to C-terminus: Phospho-N-acetylmuramoyl-pentapeptide-transferase (361 aa).

10 consecutive transmembrane segments (helical) span residues 28-48 (LAAL…IRSL), 73-93 (TMGG…WADL), 97-117 (YIWV…VDDY), 134-154 (FFWQ…TADL), 168-188 (VAIP…IVGT), 200-220 (GLAI…AYVA), 237-257 (AGEL…FLWF), 264-284 (VFMG…ITVI), 289-309 (IVLV…MIQV), and 338-358 (QVVV…LSTL).

It belongs to the glycosyltransferase 4 family. MraY subfamily. Requires Mg(2+) as cofactor.

The protein resides in the cell inner membrane. It carries out the reaction UDP-N-acetyl-alpha-D-muramoyl-L-alanyl-gamma-D-glutamyl-meso-2,6-diaminopimeloyl-D-alanyl-D-alanine + di-trans,octa-cis-undecaprenyl phosphate = di-trans,octa-cis-undecaprenyl diphospho-N-acetyl-alpha-D-muramoyl-L-alanyl-D-glutamyl-meso-2,6-diaminopimeloyl-D-alanyl-D-alanine + UMP. The protein operates within cell wall biogenesis; peptidoglycan biosynthesis. Catalyzes the initial step of the lipid cycle reactions in the biosynthesis of the cell wall peptidoglycan: transfers peptidoglycan precursor phospho-MurNAc-pentapeptide from UDP-MurNAc-pentapeptide onto the lipid carrier undecaprenyl phosphate, yielding undecaprenyl-pyrophosphoryl-MurNAc-pentapeptide, known as lipid I. In Nitrosomonas europaea (strain ATCC 19718 / CIP 103999 / KCTC 2705 / NBRC 14298), this protein is Phospho-N-acetylmuramoyl-pentapeptide-transferase.